Consider the following 235-residue polypeptide: MKVIVVKNQLEGGKIGLDLLKKSMANGAKTLGLATGSTPVEFYNQIVNSDLDFTDMVSVNLDEYVGLDGSNDQSYRYFMTKHLFGEKPFKENFLPNGKAADLEAEAKHYDQIIEENPIDWQILGIGQNGHIGFNEPGTPAEITTHVVDLQESTIKANARFFESEADVPRKAISMGLASIMKSKNIVLMAYGKEKAEAIKGMVEGEVTTELPASILQNHANVTVIADEAAVSLLSK.

The Proton acceptor; for enolization step role is filled by Asp-62. Asn-128 serves as the catalytic For ring-opening step. The active-site Proton acceptor; for ring-opening step is His-130. The active-site For ring-opening step is the Glu-135.

The protein belongs to the glucosamine/galactosamine-6-phosphate isomerase family. NagB subfamily.

It catalyses the reaction alpha-D-glucosamine 6-phosphate + H2O = beta-D-fructose 6-phosphate + NH4(+). It functions in the pathway amino-sugar metabolism; N-acetylneuraminate degradation; D-fructose 6-phosphate from N-acetylneuraminate: step 5/5. In terms of biological role, catalyzes the reversible isomerization-deamination of glucosamine 6-phosphate (GlcN6P) to form fructose 6-phosphate (Fru6P) and ammonium ion. The protein is Glucosamine-6-phosphate deaminase of Lactococcus lactis subsp. lactis (strain IL1403) (Streptococcus lactis).